A 503-amino-acid polypeptide reads, in one-letter code: GTPase Obg (503 aa).

The 158-residue stretch at 2 to 159 (PQFVDRVVLH…KDVILELKSM (158 aa)) folds into the Obg domain. The OBG-type G domain maps to 160 to 340 (ADVGLVGFPS…LKYALMDIVK (181 aa)). GTP contacts are provided by residues 166–173 (GFPSAGKS), 191–195 (FTTLV), 212–215 (DVPG), 292–295 (NKMD), and 321–323 (STV). Residues Ser-173 and Thr-193 each coordinate Mg(2+). The region spanning 371 to 444 (EFEVEADPSA…IGEITFEWDP (74 aa)) is the OCT domain. Residues 457 to 476 (RGTDVRLEQNTRATPEERKR) show a composition bias toward basic and acidic residues. A disordered region spans residues 457–503 (RGTDVRLEQNTRATPEERKRASQARRGLIDENDFGDGEVAERERWQG).

Belongs to the TRAFAC class OBG-HflX-like GTPase superfamily. OBG GTPase family. As to quaternary structure, monomer. Mg(2+) is required as a cofactor.

It is found in the cytoplasm. Functionally, an essential GTPase which binds GTP, GDP and possibly (p)ppGpp with moderate affinity, with high nucleotide exchange rates and a fairly low GTP hydrolysis rate. Plays a role in control of the cell cycle, stress response, ribosome biogenesis and in those bacteria that undergo differentiation, in morphogenesis control. The sequence is that of GTPase Obg from Corynebacterium jeikeium (strain K411).